A 493-amino-acid polypeptide reads, in one-letter code: Galactose-1-phosphate uridylyltransferase (493 aa).

It belongs to the galactose-1-phosphate uridylyltransferase type 2 family.

It is found in the cytoplasm. It catalyses the reaction alpha-D-galactose 1-phosphate + UDP-alpha-D-glucose = alpha-D-glucose 1-phosphate + UDP-alpha-D-galactose. It participates in carbohydrate metabolism; galactose metabolism. This chain is Galactose-1-phosphate uridylyltransferase, found in Streptococcus pneumoniae (strain Hungary19A-6).